The primary structure comprises 181 residues: MIQDSEFFRMEGVPITKEEIRAVSIGKLNLNPEDIVLDIGCGSGGMSVEISKRSKFVYAIDNSEDAKNTTVTNLKKFKIENCEVFLGDAKDLISEFDFNKVFIGGTQNIEQILEILKEKKIEKVVANTIVLENSVKIISKFEELRYNVDFVNVSVSYGKKINSGHIMLSKNPITIITATLK.

S-adenosyl-L-methionine-binding positions include Thr16, 40-44 (GCGSG), Asp61, and Ala89.

Belongs to the methyltransferase superfamily. Archaeal-type CbiT family.

It catalyses the reaction Co-precorrin-6B + S-adenosyl-L-methionine = Co-precorrin-7 + S-adenosyl-L-homocysteine + CO2. It participates in cofactor biosynthesis; adenosylcobalamin biosynthesis; cob(II)yrinate a,c-diamide from sirohydrochlorin (anaerobic route): step 8/10. Functionally, catalyzes the methylation of C-15 in cobalt-precorrin-6B followed by the decarboxylation of C-12 to form cobalt-precorrin-7. The protein is Probable cobalt-precorrin-6B C(15)-methyltransferase (decarboxylating) of Methanococcus maripaludis (strain C7 / ATCC BAA-1331).